The sequence spans 240 residues: Adenosine 5'-phosphosulfate reductase (240 aa).

C125, C126, C208, and C211 together coordinate [4Fe-4S] cluster. C234 acts as the Nucleophile; cysteine thiosulfonate intermediate in catalysis.

It belongs to the PAPS reductase family. CysH subfamily. The cofactor is [4Fe-4S] cluster.

The protein localises to the cytoplasm. The catalysed reaction is [thioredoxin]-disulfide + sulfite + AMP + 2 H(+) = adenosine 5'-phosphosulfate + [thioredoxin]-dithiol. It functions in the pathway sulfur metabolism; hydrogen sulfide biosynthesis; sulfite from sulfate. Catalyzes the formation of sulfite from adenosine 5'-phosphosulfate (APS) using thioredoxin as an electron donor. The polypeptide is Adenosine 5'-phosphosulfate reductase (Oceanobacillus iheyensis (strain DSM 14371 / CIP 107618 / JCM 11309 / KCTC 3954 / HTE831)).